A 1489-amino-acid polypeptide reads, in one-letter code: Sex-determining transformer protein 2 (1489 aa).

The signal sequence occupies residues 1–33 (MKLAFNKLLVASVVFTVLSFGLLLASLFTTTAT). The next 11 helical transmembrane spans lie at 454 to 474 (MIYFILGACALMVALFAAFAF), 489 to 509 (GFITGLLFIFLCKSGGLILID), 513 to 533 (LCYITMHLAFNLVMTARVTFI), 600 to 620 (YWFLIAIVLVPVIGVYWFFID), 622 to 642 (DVQKICIVLLPAFLIAAFEEM), 749 to 769 (AVVVSSVAALLILLSIGLLFI), 931 to 951 (IFAAAVLAGFFSIIVVFFSIG), 958 to 978 (LAFAFFVVGNRLEIAAIVSLF), 986 to 1006 (YTNVAVFVGFLAAWTPFCDLA), 1041 to 1061 (VQIFAIFLTATILLIVITAII), and 1066 to 1086 (AFFIPTVILLITLLLAVFNSL). Residues 1138 to 1288 (EFSIRPTENT…EQQEVTDDVA (151 aa)) are interaction with fem-3. Disordered stretches follow at residues 1143-1176 (PTENTKHYAPRPIDNSDPPEQAADEEVVNQDPSM), 1233-1393 (LLRQ…YPPS), and 1412-1489 (RNLP…TPGL). Composition is skewed to basic and acidic residues over residues 1275–1298 (DPAKEQQEVTDDVATRYKEEEVRK), 1326–1340 (VSREAPEDSPNREPR), and 1423–1433 (RPRDWDQRRLV). Residues 1402–1423 (CEDVYWKYNERNLPDNVPMPPR) form an MX regulatory domain; required for tra-1 binding region. The span at 1444–1456 (VPPPGRSAIPIPP) shows a compositional bias: pro residues. A compositionally biased stretch (basic and acidic residues) spans 1460–1482 (RLRERRREQHLREQEARRNRPES).

In terms of assembly, interacts with tra-1 and fem-3.

The protein resides in the membrane. Its function is as follows. Plays a major role in controlling sexual cell fates. Promotes female development in XX animals where it sequesters one or more of the FEM proteins to the membrane thereby freeing the tra-1 protein (a putative transcription factor) to enter the nucleus and promote female development. In XO animals it acts as a receptor for her-1 which prevents it from binding to FEM proteins thereby repressing the activity of tra-1. Negatively regulates male development when bound to fem-3 and is required together with tra-1 for promoting spermatogenesis. Also required for feminizing tra-3 activity. This chain is Sex-determining transformer protein 2, found in Caenorhabditis briggsae.